We begin with the raw amino-acid sequence, 660 residues long: Tripartite terminase subunit 3 (660 aa).

The Walker A motif signature appears at 203–210 (VPRRHGKT). Positions 294 to 299 (ILLVDE) match the Walker B motif motif. The For ATPase activity role is filled by Glu-299. Residues Asp-452, Glu-523, and Asp-637 each act as for nuclease activity in the active site.

This sequence belongs to the herpesviridae TRM3 protein family. As to quaternary structure, interacts with the terminase subunits TRM1 and TRM2. Interacts with portal protein.

It is found in the host nucleus. Functionally, component of the molecular motor that translocates viral genomic DNA in empty capsid during DNA packaging. Forms a tripartite terminase complex together with TRM1 and TRM2 in the host cytoplasm. Once the complex reaches the host nucleus, it interacts with the capsid portal vertex. This portal forms a ring in which genomic DNA is translocated into the capsid. TRM3 carries an RNase H-like nuclease activity that plays an important role for the cleavage of concatemeric viral DNA into unit length genomes. The protein is Tripartite terminase subunit 3 of Elephas maximus (Indian elephant).